A 148-amino-acid polypeptide reads, in one-letter code: Pivalyl-CoA mutase small subunit (148 aa).

The 131-residue stretch at 8 to 138 (PLRVLVTKIG…TALGQKSRAE (131 aa)) folds into the B12-binding domain. Adenosylcob(III)alamin is bound at residue His-21.

This sequence belongs to the acyl-CoA mutase small subunit family. Monomer in the absence of the PCM large subunit. Weakly interacts with the PCM large subunit; an alpha(2)beta(2) stoichiometry seems to represent the active state of the enzyme. Adenosylcob(III)alamin serves as cofactor.

The catalysed reaction is 3-methylbutanoyl-CoA = 2,2-dimethylpropanoyl-CoA. In terms of biological role, together with Xaut_5043, catalyzes the reversible isomerization between pivalyl-CoA and isovaleryl-CoA, using radical chemistry. Does not exhibit isobutyryl-CoA mutase (ICM) activity. The protein is Pivalyl-CoA mutase small subunit of Xanthobacter autotrophicus (strain ATCC BAA-1158 / Py2).